The primary structure comprises 142 residues: DNA-directed RNA polymerase subunit omega (142 aa).

The interval 104–142 (FNTDADVDQESTDIQDDEVENEMSNQDSEDIDDEVDNEE) is disordered. A compositionally biased stretch (acidic residues) spans 108–142 (ADVDQESTDIQDDEVENEMSNQDSEDIDDEVDNEE).

The protein belongs to the RNA polymerase subunit omega family. The RNAP catalytic core consists of 2 alpha, 1 beta, 1 beta' and 1 omega subunit. When a sigma factor is associated with the core the holoenzyme is formed, which can initiate transcription.

It catalyses the reaction RNA(n) + a ribonucleoside 5'-triphosphate = RNA(n+1) + diphosphate. Promotes RNA polymerase assembly. Latches the N- and C-terminal regions of the beta' subunit thereby facilitating its interaction with the beta and alpha subunits. In Wolbachia sp. subsp. Brugia malayi (strain TRS), this protein is DNA-directed RNA polymerase subunit omega.